A 2215-amino-acid polypeptide reads, in one-letter code: Unconventional myosin-VIIa (2215 aa).

Positions 65–741 (HGVEDMIRLG…HDMLLEVERD (677 aa)) constitute a Myosin motor domain. Position 158-165 (158-165 (GESGAGKT)) interacts with ATP. Residues 632–639 (FVRCIKPN) form an actin-binding region. IQ domains lie at 745–765 (TDRV…SNFL), 768–788 (KNAA…KNYG), 791–811 (RLGF…QQYR), 814–834 (RQRI…KAFR), and 837–857 (LWAV…RLHQ). Residues 858 to 935 (RLRAEYLWRL…LEQMERARHE (78 aa)) form an SAH region. Positions 1017–1253 (YTRRPLKQPL…PSWLELQATK (237 aa)) constitute a MyTH4 1 domain. The FERM 1 domain maps to 1258-1602 (IMLPVTFMDG…LVVTFLEGLR (345 aa)). The residue at position 1569 (Ser-1569) is a Phosphoserine. Residue Thr-1571 is modified to Phosphothreonine. The SH3 domain occupies 1603-1672 (KRSKYVVALQ…PTDSVYVMPT (70 aa)). Positions 1747 to 1896 (HTREPLKQAL…PHLVEVEAIQ (150 aa)) constitute a MyTH4 2 domain. The 304-residue stretch at 1902–2205 (IFHKVYFPDD…SYISQMLTAM (304 aa)) folds into the FERM 2 domain.

The protein belongs to the TRAFAC class myosin-kinesin ATPase superfamily. Myosin family. As to quaternary structure, might homodimerize in a two headed molecule through the formation of a coiled-coil rod. Identified in a complex with USH1C and USH1G. Interacts with MYRIP. Interacts with RPE65. Interacts with CIB2. May interact with CALM. Interacts with WHRN. Interacts with PLEKHB1 (via PH domain). Interacts with PCDH15. Interacts with TWF2. Interacts with USH1G. Interacts with MYH9. Interacts (via MyTH4-FERM domains) with cytoplasmic regions of ADGRV1 and USH2A. Interacts with PDZD7 (via MyTH4-FERM domains). Interacts with CALML4. As to expression, expressed in the pigment epithelium and the photoreceptor cells of the retina. Also found in kidney, liver, testis, cochlea, lymphocytes. Not expressed in brain.

The protein localises to the cytoplasm. It localises to the cell cortex. It is found in the cytoskeleton. The protein resides in the synapse. ATP hydrolysis is inhibited by Mg(2+), already at a concentration of 0.4 mM. In terms of biological role, myosins are actin-based motor molecules with ATPase activity. Unconventional myosins serve in intracellular movements. Their highly divergent tails bind to membranous compartments, which are then moved relative to actin filaments. In the retina, plays an important role in the renewal of the outer photoreceptor disks. Plays an important role in the distribution and migration of retinal pigment epithelial (RPE) melanosomes and phagosomes, and in the regulation of opsin transport in retinal photoreceptors. In the inner ear, plays an important role in differentiation, morphogenesis and organization of cochlear hair cell bundles. Involved in hair-cell vesicle trafficking of aminoglycosides, which are known to induce ototoxicity. Motor protein that is a part of the functional network formed by USH1C, USH1G, CDH23 and MYO7A that mediates mechanotransduction in cochlear hair cells. Required for normal hearing. The protein is Unconventional myosin-VIIa of Homo sapiens (Human).